Consider the following 224-residue polypeptide: Small ribosomal subunit protein uS3 (224 aa).

Positions 39–107 (VRKYIQNALA…PVHINIEEIR (69 aa)) constitute a KH type-2 domain.

It belongs to the universal ribosomal protein uS3 family. In terms of assembly, part of the 30S ribosomal subunit. Forms a tight complex with proteins S10 and S14.

In terms of biological role, binds the lower part of the 30S subunit head. Binds mRNA in the 70S ribosome, positioning it for translation. In Saccharophagus degradans (strain 2-40 / ATCC 43961 / DSM 17024), this protein is Small ribosomal subunit protein uS3.